The sequence spans 225 residues: Cyanamide hydratase DDI2 (225 aa).

The 111-residue stretch at 52–162 (VLNHSLRVFQ…LQIATTLDNV (111 aa)) folds into the HD domain.

This sequence belongs to the cyanamide dehydrase family. In terms of assembly, homohexamer. It depends on Zn(2+) as a cofactor.

The catalysed reaction is urea = cyanamide + H2O. Functionally, cyanamide hydratase involved in the detoxification and/or utilization of cyanamide, a toxic nitrile compound distributed widely in the environment. The polypeptide is Cyanamide hydratase DDI2 (Saccharomyces cerevisiae (strain ATCC 204508 / S288c) (Baker's yeast)).